Here is a 452-residue protein sequence, read N- to C-terminus: MALPIVAIIGRPNVGKSTLVNRLAKDRQAIVHDQPGITRDRTYRPAFWCDRDFQVVDTGGLVFDDDTEFLPLIREQAMAALTEASAAIFVVDGQLGPTAGDREISDWLRRQKVPVLLAVNKCESPEMGLIQAAEFWELGLGEPYPISGIHGSGTGELLDQLITYLPSPDELPDREEINVSIIGRPNVGKSSLLNAFLGEQRAIVSPISGTTRDAIDTVVERGDNTYRLIDTAGIRRKKNVNYGAEFFSINRAFKAIRRADVVLLVIDAIDGVTDQDIKLADRIIDEGRAAIIVVNKWDAVEKDSYTIYDYKQKVMDRLYFMEWADIIFVSAMSGKRVENIFELVDVAVEEHRRRVNTSVVNEVLEEAVKWHSPPTTKQGKQGRIYYGTQVSSQPPTIALFVNDPKRFNDNYRRYIERQFREQIGFPGTPIRLLWRGKKTRDVEPSLNRATKV.

EngA-type G domains lie at 4-169 (PIVA…PSPD) and 177-352 (INVS…EEHR). Residues 10-17 (GRPNVGKS), 57-61 (DTGGL), 120-123 (NKCE), 183-190 (GRPNVGKS), 230-234 (DTAGI), and 295-298 (NKWD) each bind GTP. The 86-residue stretch at 353–438 (RRVNTSVVNE…PIRLLWRGKK (86 aa)) folds into the KH-like domain.

It belongs to the TRAFAC class TrmE-Era-EngA-EngB-Septin-like GTPase superfamily. EngA (Der) GTPase family. Associates with the 50S ribosomal subunit.

In terms of biological role, GTPase that plays an essential role in the late steps of ribosome biogenesis. The sequence is that of GTPase Der from Crocosphaera subtropica (strain ATCC 51142 / BH68) (Cyanothece sp. (strain ATCC 51142)).